Reading from the N-terminus, the 494-residue chain is UDP-N-acetylmuramoyl-L-alanyl-D-glutamate--L-lysine ligase (494 aa).

Serine 30 contacts UDP-N-acetyl-alpha-D-muramoyl-L-alanyl-D-glutamate. Glycine 110–serine 116 serves as a coordination point for ATP. UDP-N-acetyl-alpha-D-muramoyl-L-alanyl-D-glutamate is bound by residues threonine 152–threonine 153, serine 179, and arginine 187. An N6-carboxylysine modification is found at lysine 219. The L-lysine recognition motif motif lies at aspartate 406 to alanine 409.

The protein belongs to the MurCDEF family. MurE subfamily. Carboxylation is probably crucial for Mg(2+) binding and, consequently, for the gamma-phosphate positioning of ATP.

The protein resides in the cytoplasm. It catalyses the reaction UDP-N-acetyl-alpha-D-muramoyl-L-alanyl-D-glutamate + L-lysine + ATP = UDP-N-acetyl-alpha-D-muramoyl-L-alanyl-gamma-D-glutamyl-L-lysine + ADP + phosphate + H(+). Its pathway is cell wall biogenesis; peptidoglycan biosynthesis. Catalyzes the addition of L-lysine to the nucleotide precursor UDP-N-acetylmuramoyl-L-alanyl-D-glutamate (UMAG) in the biosynthesis of bacterial cell-wall peptidoglycan. The polypeptide is UDP-N-acetylmuramoyl-L-alanyl-D-glutamate--L-lysine ligase (Staphylococcus aureus (strain Mu3 / ATCC 700698)).